Reading from the N-terminus, the 1216-residue chain is SPOC domain-containing protein 1 (1216 aa).

Disordered stretches follow at residues 1–74 (MSQA…RAAG), 166–216 (EARD…GAHS), 236–325 (NLLS…PPQS), 348–462 (RTGS…PRLE), and 511–601 (SSPS…QQEK). Positions 36 to 50 (PGLSPDGPGASSGPG) are enriched in low complexity. Positions 177-190 (CDRRSPTLSKEEPP) are enriched in basic and acidic residues. Over residues 204–213 (RVRKKWRRQG) the composition is skewed to basic residues. Residues 266 to 278 (SGPGEPGGSGAGC) show a composition bias toward gly residues. Low complexity predominate over residues 314–325 (SLSSAAQAPPQS). Basic and acidic residues predominate over residues 436–452 (RGTDRSSDNSHQDRPEE). Over residues 581–592 (EAEEDSLPEQPE) the composition is skewed to acidic residues. Residues 608-728 (VRGTVVRSMQ…IIEQQQKEPC (121 aa)) enclose the TFIIS central domain. The interval 823–850 (QTPMPAPEMPKTRELSPTEPQDRVPPSG) is disordered. Positions 832–844 (PKTRELSPTEPQD) are enriched in basic and acidic residues. Residues 867–970 (WEGVLDMFSI…VEHMGMVLLP (104 aa)) enclose the SPOC domain. Positions 1046–1055 (RYYQPDDRRP) are enriched in basic and acidic residues. 2 disordered regions span residues 1046–1140 (RYYQ…QHFH) and 1176–1216 (PRPL…PRKA).

In terms of assembly, interacts with DNMT3A, DNMT3C and DNMT3L. Interacts with C19orf84. Interacts with SPIN1; promoting recruitment to transposons marked with histone H3 trimethylated at both 'Lys-4' and 'Lys-9' (H3K4me3K9me3).

The protein resides in the nucleus. It localises to the chromosome. Its function is as follows. Protein adapter that acts as an essential executor of PIWIL4-piRNA pathway directed transposon DNA methylation and silencing in the male embryonic germ cells. Recruited to young transposons, which are specifically marked with histone H3 trimethylated at both 'Lys-4' and 'Lys-9' (H3K4me3K9me3), via its association with SPIN1 chromatin reader, and associates with the de novo DNA methylation machinery and repressive chromatin remodeling complexes. Following this, PIWIL4 engages with nascent transposable element transcript to direct piRNA-directed DNA methylation. Not required for piRNA biosynthesis. The protein is SPOC domain-containing protein 1 of Homo sapiens (Human).